The sequence spans 482 residues: GTPase Obg (482 aa).

An Obg domain is found at 2-159; the sequence is PRFVDRVVIH…VDLTLELKTV (158 aa). Residues 160–340 form the OBG-type G domain; the sequence is ADVGLVGFPS…LTFALWEMIV (181 aa). GTP-binding positions include 166 to 173, 191 to 195, 212 to 215, 292 to 295, and 321 to 323; these read GFPSAGKS, FTTLV, DVPG, NKVD, and STL. Residues S173 and T193 each contribute to the Mg(2+) site. The OCT domain maps to 358–438; the sequence is PIPVDESGFT…IGDMTFDWEP (81 aa). A disordered region spans residues 441-482; it reads PAGVDVTMSGRGTDARIDKTDRVGAAERRQARRVRRGQVEPE. Over residues 453 to 469 the composition is skewed to basic and acidic residues; that stretch reads TDARIDKTDRVGAAERR.

Belongs to the TRAFAC class OBG-HflX-like GTPase superfamily. OBG GTPase family. In terms of assembly, monomer. It depends on Mg(2+) as a cofactor.

It is found in the cytoplasm. Functionally, an essential GTPase which binds GTP, GDP and possibly (p)ppGpp with moderate affinity, with high nucleotide exchange rates and a fairly low GTP hydrolysis rate. Plays a role in control of the cell cycle, stress response, ribosome biogenesis and in those bacteria that undergo differentiation, in morphogenesis control. The chain is GTPase Obg from Mycobacteroides abscessus (strain ATCC 19977 / DSM 44196 / CCUG 20993 / CIP 104536 / JCM 13569 / NCTC 13031 / TMC 1543 / L948) (Mycobacterium abscessus).